We begin with the raw amino-acid sequence, 112 residues long: Integration host factor subunit alpha (112 aa).

It belongs to the bacterial histone-like protein family. Heterodimer of an alpha and a beta chain.

Functionally, this protein is one of the two subunits of integration host factor, a specific DNA-binding protein that functions in genetic recombination as well as in transcriptional and translational control. The sequence is that of Integration host factor subunit alpha from Rhizobium etli (strain CIAT 652).